We begin with the raw amino-acid sequence, 283 residues long: MKIKKKYCGHVIIVGKANVGKSTLLNNIIGKKISIVSRKKNTTQSNITGIKTEDNYQSIYIDTPGVVFDKNNNQMKHHKNNFYQTTQIATLIIFIIDRIDWTIHDEIILNEIKKTKIPILIIINKIDKISNKIILLPFINFLKKKIDFIEILPISAKKISNLILLKNIIKSYLPENCHIYPECYITTNSDFFTVSEIIREQLILFLGDELPSIIKVEIESFKKKEKIALYIKAIIWVKNVRQKSIVIGHNGEKIKKISMISRNNIEKKFYIKTHLVLWVKDKN.

Positions 7–175 (YCGHVIIVGK…KNIIKSYLPE (169 aa)) constitute an Era-type G domain. Positions 15–22 (GKANVGKS) are G1. Residue 15 to 22 (GKANVGKS) coordinates GTP. Residues 41–45 (NTTQS) are G2. Residues 62-65 (DTPG) form a G3 region. GTP contacts are provided by residues 62-66 (DTPGV) and 124-127 (NKID). Residues 124–127 (NKID) are G4. The interval 154–156 (ISA) is G5. Residues 198–283 (IREQLILFLG…HLVLWVKDKN (86 aa)) form the KH type-2 domain.

This sequence belongs to the TRAFAC class TrmE-Era-EngA-EngB-Septin-like GTPase superfamily. Era GTPase family. Monomer.

The protein localises to the cytoplasm. Its subcellular location is the cell membrane. In terms of biological role, an essential GTPase that binds both GDP and GTP, with rapid nucleotide exchange. Plays a role in 16S rRNA processing and 30S ribosomal subunit biogenesis and possibly also in cell cycle regulation and energy metabolism. This chain is GTPase Era, found in Buchnera aphidicola subsp. Acyrthosiphon pisum (strain APS) (Acyrthosiphon pisum symbiotic bacterium).